A 452-amino-acid chain; its full sequence is Coproporphyrinogen III oxidase, anaerobic 1 (452 aa).

One can recognise a Radical SAM core domain in the interval 45 to 278; the sequence is LDPAVPISVY…ANLAARLFTE (234 aa). Tyrosine 54 contributes to the S-adenosyl-L-methionine binding site. Residues cysteine 60 and cysteine 64 each contribute to the [4Fe-4S] cluster site. Phenylalanine 66 contacts S-adenosyl-L-methionine. A [4Fe-4S] cluster-binding site is contributed by cysteine 67. Residues glycine 111, 112-113, glutamate 144, glutamine 171, arginine 183, and aspartate 208 each bind S-adenosyl-L-methionine; that span reads GT.

The protein belongs to the anaerobic coproporphyrinogen-III oxidase family. As to quaternary structure, monomer. The cofactor is [4Fe-4S] cluster.

It localises to the cytoplasm. It carries out the reaction coproporphyrinogen III + 2 S-adenosyl-L-methionine = protoporphyrinogen IX + 2 5'-deoxyadenosine + 2 L-methionine + 2 CO2. It functions in the pathway porphyrin-containing compound metabolism; protoporphyrin-IX biosynthesis; protoporphyrinogen-IX from coproporphyrinogen-III (AdoMet route): step 1/1. In terms of biological role, anaerobic transformation of coproporphyrinogen III into protoporphyrinogen IX. Dedicated to bacteriochlorophyll biosynthesis. The chain is Coproporphyrinogen III oxidase, anaerobic 1 (hemN) from Cereibacter sphaeroides (strain ATCC 17023 / DSM 158 / JCM 6121 / CCUG 31486 / LMG 2827 / NBRC 12203 / NCIMB 8253 / ATH 2.4.1.) (Rhodobacter sphaeroides).